Consider the following 422-residue polypeptide: UDP-N-acetylglucosamine 1-carboxyvinyltransferase (422 aa).

Phosphoenolpyruvate is bound at residue K22–N23. R93 is a UDP-N-acetyl-alpha-D-glucosamine binding site. The active-site Proton donor is the C117. The residue at position 117 (C117) is a 2-(S-cysteinyl)pyruvic acid O-phosphothioketal. UDP-N-acetyl-alpha-D-glucosamine is bound by residues R122–L126, D308, and L330.

Belongs to the EPSP synthase family. MurA subfamily.

The protein resides in the cytoplasm. The enzyme catalyses phosphoenolpyruvate + UDP-N-acetyl-alpha-D-glucosamine = UDP-N-acetyl-3-O-(1-carboxyvinyl)-alpha-D-glucosamine + phosphate. It functions in the pathway cell wall biogenesis; peptidoglycan biosynthesis. Its function is as follows. Cell wall formation. Adds enolpyruvyl to UDP-N-acetylglucosamine. This Helicobacter acinonychis (strain Sheeba) protein is UDP-N-acetylglucosamine 1-carboxyvinyltransferase.